A 657-amino-acid polypeptide reads, in one-letter code: N-acetylgalactosaminyltransferase 7 (657 aa).

Residues 1 to 6 (MRLKIG) are Cytoplasmic-facing. The helical; Signal-anchor for type II membrane protein transmembrane segment at 7–29 (FILRSLLVVGSFLGLVVLWSSLS) threads the bilayer. Positions 30-66 (SRPDDPSPLSRMREDRDVNNPLPNRGGNGLAPGDDRF) are disordered. Over 30–657 (SRPDDPSPLS…KWEMNNIHSV (628 aa)) the chain is Lumenal. Cystine bridges form between Cys-197–Cys-435, Cys-426–Cys-507, Cys-545–Cys-562, Cys-585–Cys-600, and Cys-625–Cys-640. Residues 206–317 (LLTSSVVIVF…VNWYAPLVAP (112 aa)) are catalytic subdomain A. Substrate-binding residues include Asp-247 and Arg-277. 2 residues coordinate Mn(2+): Asp-301 and His-303. Positions 381-443 (PYRSPAMAGG…PCSRVGHIYR (63 aa)) are catalytic subdomain B. Trp-412 serves as a coordination point for substrate. His-440 provides a ligand contact to Mn(2+). Residue Arg-443 participates in substrate binding. A Ricin B-type lectin domain is found at 532-652 (VEWGEIRGLE…GKMTQKWEMN (121 aa)).

Belongs to the glycosyltransferase 2 family. GalNAc-T subfamily. Mn(2+) is required as a cofactor. Highly expressed in sublingual gland. Expressed at lower level in stomach, small intestiine and colon.

It localises to the golgi apparatus membrane. The catalysed reaction is L-seryl-[protein] + UDP-N-acetyl-alpha-D-galactosamine = a 3-O-[N-acetyl-alpha-D-galactosaminyl]-L-seryl-[protein] + UDP + H(+). It catalyses the reaction L-threonyl-[protein] + UDP-N-acetyl-alpha-D-galactosamine = a 3-O-[N-acetyl-alpha-D-galactosaminyl]-L-threonyl-[protein] + UDP + H(+). It participates in protein modification; protein glycosylation. Its function is as follows. Glycopeptide transferase involved in O-linked oligosaccharide biosynthesis, which catalyzes the transfer of an N-acetyl-D-galactosamine residue to an already glycosylated peptide. In contrast to other proteins of the family, it does not act as a peptide transferase that transfers GalNAc onto serine or threonine residue on the protein receptor, but instead requires the prior addition of a GalNAc on a peptide before adding additional GalNAc moieties. Some peptide transferase activity is however not excluded, considering that its appropriate peptide substrate may remain unidentified. The protein is N-acetylgalactosaminyltransferase 7 (Galnt7) of Rattus norvegicus (Rat).